A 382-amino-acid chain; its full sequence is Transforming growth factor beta-1 proprotein (382 aa).

An N-terminal signal peptide occupies residues 1 to 21; it reads MEVLWMLLVLLVLHLSSLAMS. Positions 22 to 65 are straightjacket domain; sequence LSTCKAVDMEEVRKRRIEAIRGQILSKLKLDKTPDVDSEKMTVP. The interval 66-263 is arm domain; it reads SEAIFLYNST…SMPAERIDTV (198 aa). Residues N73, N123, and N166 are each glycosylated (N-linked (GlcNAc...) asparagine). The interval 218–242 is bowtie tail; it reads PTPQAKDIDIEGFPALRGDLASLSS. Residues 234–236 carry the Cell attachment site motif; sequence RGD. 4 cysteine pairs are disulfide-bonded: C277–C286, C285–C348, C314–C379, and C318–C381.

This sequence belongs to the TGF-beta family. Latency-associated peptide: Homodimer; disulfide-linked. Latency-associated peptide: Interacts with Transforming growth factor beta-1 (TGF-beta-1) chain; interaction is non-covalent and maintains (TGF-beta-1) in a latent state; each Latency-associated peptide (LAP) monomer interacts with TGF-beta-1 in the other monomer. Transforming growth factor beta-1: Homodimer; disulfide-linked. Transforming growth factor beta-1: Interacts with TGF-beta receptors (tgfbr1 and tgfbr2), leading to signal transduction. Transforming growth factor beta-1 proprotein: The precursor proprotein is cleaved in the Golgi apparatus to form Transforming growth factor beta-1 (TGF-beta-1) and Latency-associated peptide (LAP) chains, which remain non-covalently linked, rendering TGF-beta-1 inactive.

The protein localises to the secreted. It is found in the extracellular space. It localises to the extracellular matrix. Transforming growth factor beta-1 proprotein: Precursor of the Latency-associated peptide (LAP) and Transforming growth factor beta-1 (TGF-beta-1) chains, which constitute the regulatory and active subunit of TGF-beta-1, respectively. In terms of biological role, required to maintain the Transforming growth factor beta-1 (TGF-beta-1) chain in a latent state during storage in extracellular matrix. Associates non-covalently with TGF-beta-1 and regulates its activation via interaction with 'milieu molecules', such as LTBP1, LRRC32/GARP and LRRC33/NRROS, that control activation of TGF-beta-1. Interaction with integrins (ITGAV:ITGB6 or ITGAV:ITGB8) results in distortion of the Latency-associated peptide chain and subsequent release of the active TGF-beta-1. Its function is as follows. Transforming growth factor beta-1: Multifunctional protein that regulates the growth and differentiation of various cell types and is involved in various processes, such as normal development, immune function, microglia function and responses to neurodegeneration. Activation into mature form follows different steps: following cleavage of the proprotein in the Golgi apparatus, Latency-associated peptide (LAP) and Transforming growth factor beta-1 (TGF-beta-1) chains remain non-covalently linked rendering TGF-beta-1 inactive during storage in extracellular matrix. At the same time, LAP chain interacts with 'milieu molecules', such as ltbp1, lrrc32/garp and lrrc33/nrros that control activation of TGF-beta-1 and maintain it in a latent state during storage in extracellular milieus. TGF-beta-1 is released from LAP by integrins (ITGAV:ITGB6 or ITGAV:ITGB8): integrin-binding to LAP stabilizes an alternative conformation of the LAP bowtie tail and results in distortion of the LAP chain and subsequent release of the active TGF-beta-1. Once activated following release of LAP, TGF-beta-1 acts by binding to TGF-beta receptors (tgfbr1 and tgfbr2), which transduce signal. While expressed by many cells types, TGF-beta-1 only has a very localized range of action within cell environment thanks to fine regulation of its activation by Latency-associated peptide chain (LAP) and 'milieu molecules'. Plays an important role in bone remodeling: acts as a potent stimulator of osteoblastic bone formation. Can promote either T-helper 17 cells (Th17) or regulatory T-cells (Treg) lineage differentiation in a concentration-dependent manner. Can induce epithelial-to-mesenchymal transition (EMT) and cell migration in various cell types. This Xenopus laevis (African clawed frog) protein is Transforming growth factor beta-1 proprotein (tgfb1).